A 130-amino-acid polypeptide reads, in one-letter code: Peptide methionine sulfoxide reductase MsrB (130 aa).

The 122-residue stretch at 1–122 (MKKREDMTEM…NSVSMAFEDS (122 aa)) folds into the MsrB domain. Cys-39, Cys-42, Cys-88, and Cys-91 together coordinate Zn(2+). Cys-111 functions as the Nucleophile in the catalytic mechanism.

The protein belongs to the MsrB Met sulfoxide reductase family. It depends on Zn(2+) as a cofactor.

The catalysed reaction is L-methionyl-[protein] + [thioredoxin]-disulfide + H2O = L-methionyl-(R)-S-oxide-[protein] + [thioredoxin]-dithiol. This is Peptide methionine sulfoxide reductase MsrB from Pasteurella multocida (strain Pm70).